We begin with the raw amino-acid sequence, 184 residues long: J-type co-chaperone JAC1, mitochondrial (184 aa).

The N-terminal 10 residues, 1-10 (MLKYLVQRRF), are a transit peptide targeting the mitochondrion. One can recognise a J domain in the interval 13-82 (TFYELFPKTF…LRRSQYMLKL (70 aa)). Residues 48 to 50 (HPD) carry the HSP70 binding motif. The interaction with ISU1 stretch occupies residues 71–184 (DPLRRSQYML…APGKQLEMNH (114 aa)).

The protein belongs to the HscB family. In terms of assembly, interacts with ISU1 and SSQ1.

The protein resides in the mitochondrion matrix. In terms of biological role, co-chaperone required for the assembly of iron-sulfur (Fe/S) clusters in mitochondria. Stimulates the ATPase activity of its specialized Hsp70 chaperone partner SSQ1, to mediate the transfer of iron-sulfur clusters from ISU1 to GRX5. Binds to the substrate protein ISU1 and targets it to SSQ1. The chain is J-type co-chaperone JAC1, mitochondrial from Saccharomyces cerevisiae (strain ATCC 204508 / S288c) (Baker's yeast).